The primary structure comprises 645 residues: Developmental regulatory protein wetA (645 aa).

Disordered stretches follow at residues 158-187 (SLHS…RKPK), 201-249 (TNLR…VSPP), 284-376 (YYGQ…QMHW), 461-578 (AQTF…DGAS), and 596-618 (GVAP…DRRR). Over residues 240 to 249 (TQGNLPVSPP) the composition is skewed to polar residues. Composition is skewed to basic residues over residues 315 to 326 (QHHHHPHHHHQQ) and 351 to 361 (QHQHQHHHQQQ). Over residues 362 to 373 (QHHQQQQQQQHQ) the composition is skewed to low complexity. A compositionally biased stretch (polar residues) spans 509–518 (GPSSSPTPAD). The segment covering 528–546 (SSGASVSSLRSSSGRLPAS) has biased composition (low complexity). The segment covering 562 to 572 (ISGSNSATSLG) has biased composition (polar residues).

Belongs to the wetA family.

Its function is as follows. BrlA, abaA and wetA are pivotal regulators of conidiophore development and conidium maturation. They act individually and together to regulate their own expression and that of numerous other sporulation-specific genes. BrlA, abaA and wetA act together to positively regulate the expression of the Pks1 gene cluster that mediates the biosynthesis of an anthraquinone derivative pigment that contributes to conidial pigmentation that provides protection from UV radiation, heat and cold stress. The chain is Developmental regulatory protein wetA from Metarhizium robertsii (strain ARSEF 23 / ATCC MYA-3075) (Metarhizium anisopliae (strain ARSEF 23)).